The chain runs to 648 residues: Adhesion G-protein coupled receptor G1 (648 aa).

The signal sequence occupies residues 1–24; it reads MKQNPAKTARMWIIICLLFVLGQA. Residues 25–370 lie on the Extracellular side of the membrane; it reads TDNDRDFKMC…STVRHLKALT (346 aa). Cysteine 34 and cysteine 96 form a disulfide bridge. N-linked (GlcNAc...) asparagine glycosylation is found at asparagine 62, asparagine 91, asparagine 114, asparagine 146, asparagine 222, asparagine 262, and asparagine 286. Cysteine 127 and cysteine 176 are oxidised to a cystine. In terms of domain architecture, GAIN-B spans 214 to 361; sequence MDEEFTGHNF…AILVQVEQKS (148 aa). Cystine bridges form between cysteine 313–cysteine 343 and cysteine 331–cysteine 345. Residues 313 to 361 form a GPS region; it reads CVSWDTKQDNEVNWKDDGCDTVKINEEQTECHCNHLTYFAILVQVEQKS. Residues 349–361 form a stachel region; sequence TYFAILVQVEQKS. A helical membrane pass occupies residues 371 to 391; that stretch reads FITAVGCAVSLVSCLVLFYWL. Residues 392–408 lie on the Cytoplasmic side of the membrane; the sequence is CKRRRGKKNQISLVHRG. Residues 409-429 form a helical membrane-spanning segment; it reads LVVAIFLLCLFFILTGILANV. The Extracellular portion of the chain corresponds to 430–443; it reads ANETVCQLTGSLLH. Residue asparagine 431 is glycosylated (N-linked (GlcNAc...) asparagine). The chain crosses the membrane as a helical span at residues 444–464; that stretch reads YGLLSTLCWMAMEVFHTFLLV. Residues 465–471 lie on the Cytoplasmic side of the membrane; the sequence is RKVFNSP. The chain crosses the membrane as a helical span at residues 472–492; it reads LPIWIFYLMGFGFPFLLVSIL. Over 493 to 530 the chain is Extracellular; it reads LSVGDIYGERKIKPSDDVNNPYRMCWMTEGDKSQLAHY. Residues 531-551 form a helical membrane-spanning segment; sequence IINIGLLAVVVSSGLVMLFLV. At 552-563 the chain is on the cytoplasmic side; sequence VREIRNRPDWKK. Residues 564–586 traverse the membrane as a helical segment; that stretch reads IHVAFLSIWGLTCLYGTTWALGF. The Extracellular portion of the chain corresponds to 587-595; it reads LDFGPFSEV. Residues 596-618 form a helical membrane-spanning segment; the sequence is TLFLFCIINSLQGFFLMLRYYAL. The Cytoplasmic portion of the chain corresponds to 619-648; sequence ERMKKKDVSSSDGSSSGSSKQHMLQTNEKS.

Belongs to the G-protein coupled receptor 2 family. LN-TM7 subfamily. In terms of assembly, heterodimer of 2 chains generated by proteolytic processing; the large extracellular N-terminal fragment (ADGRG1 NT) and the membrane-bound C-terminal fragment (ADGRG1-CT) predominantly remain associated and non-covalently linked. Autoproteolytically cleaved into 2 fragments; the large extracellular N-terminal fragment (ADGRG1 NT) and the membrane-bound C-terminal fragment (ADGRG1 CT) predominantly remain associated and non-covalently linked.

The protein resides in the cell membrane. Its activity is regulated as follows. Forms a heterodimer of 2 chains generated by proteolytic processing that remain associated through non-covalent interactions mediated by the GAIN-B domain. In the inactivated receptor, the Stachel sequence (also named stalk) is embedded in the GAIN-B domain, where it adopts a beta-strand conformation. On activation, the Stachel moves into the 7 transmembrane region and adopts a twisted hook-shaped configuration that forms contacts within the receptor, leading to coupling of a G-alpha protein, which activates signaling. The cleaved GAIN-B and N-terminal domains can then dissociate from the rest of the receptor. Functionally, adhesion G-protein coupled receptor (aGPCR), which is involved in oligodendrocyte development and maintenance of peripheral myelin. Ligand binding causes a conformation change that triggers signaling via guanine nucleotide-binding proteins (G proteins) and modulates the activity of downstream effectors, such as RhoA pathway. Adgrg1 is coupled to G(12) and/or G(13) G proteins (gna12 and gna13, respectively) and mediates the activation Rho small GTPases. Adgrg1-dependent RhoA signaling promotes timely radial sorting of axons. Required to establish proper myelin thickness and facilitate organization of the myelin sheath in the mature peripheral nervous system. The sequence is that of Adhesion G-protein coupled receptor G1 from Danio rerio (Zebrafish).